The sequence spans 292 residues: Sulfofructosephosphate aldolase (292 aa).

K193 acts as the Schiff-base intermediate with substrate in catalysis.

The protein belongs to the aldolase LacD family. As to quaternary structure, homotetramer.

The enzyme catalyses 6-deoxy-6-sulfo-D-fructose 1-phosphate = (2S)-3-sulfolactaldehyde + dihydroxyacetone phosphate. Its function is as follows. Cleaves 6-deoxy-6-sulfo-D-fructose 1-phosphate (SFP) to form dihydroxyacetone phosphate (DHAP) and 3-sulfolactaldehyde (SLA). This is Sulfofructosephosphate aldolase (yihT) from Escherichia coli O157:H7.